We begin with the raw amino-acid sequence, 201 residues long: Recombination protein RecR (201 aa).

The C4-type zinc-finger motif lies at 57-72 (CECCRTLTEEPLCRIC). Positions 81-176 (GVLCIVETPA…NTTRIAHGVP (96 aa)) constitute a Toprim domain.

This sequence belongs to the RecR family.

In terms of biological role, may play a role in DNA repair. It seems to be involved in an RecBC-independent recombinational process of DNA repair. It may act with RecF and RecO. This Idiomarina loihiensis (strain ATCC BAA-735 / DSM 15497 / L2-TR) protein is Recombination protein RecR.